Reading from the N-terminus, the 212-residue chain is Probable GTP-binding protein EngB (212 aa).

The region spanning 38 to 210 is the EngB-type G domain; the sequence is ALPQIAFVGK…KTSLAKCIKL (173 aa). Residues 46–53, 73–77, 91–94, 158–161, and 189–191 contribute to the GTP site; these read GKSNVGKS, GRTRQ, DLPG, TKSD, and VSS. Positions 53 and 75 each coordinate Mg(2+).

It belongs to the TRAFAC class TrmE-Era-EngA-EngB-Septin-like GTPase superfamily. EngB GTPase family. The cofactor is Mg(2+).

Functionally, necessary for normal cell division and for the maintenance of normal septation. This Rickettsia bellii (strain OSU 85-389) protein is Probable GTP-binding protein EngB.